A 551-amino-acid polypeptide reads, in one-letter code: Structure-specific endonuclease subunit MUS81 (551 aa).

Disordered regions lie at residues His84–Trp131 and Phe229–Pro259. A compositionally biased stretch (low complexity) spans Ala92–Pro107. Phosphoserine is present on Ser95. Positions Val110 to Trp131 are enriched in polar residues. The interaction with BLM stretch occupies residues Gly124–Ala244. The tract at residues Trp131–Arg230 is winged helix domain (WHD); critical for endonuclease activity. Over residues Phe229 to Asp238 the composition is skewed to basic and acidic residues. Residues Leu270–Gly372 enclose the ERCC4 domain. Active-site residues include Asp274, Glu277, and Asp307. Residues Asp274, Glu277, Asp307, Glu333, and Arg334 each contribute to the Mg(2+) site. Residues Val471 to Cys545 form a helix-hairpin-helix (2HhH); involved in DNA recognition and bending region.

This sequence belongs to the XPF family. Part of the heterodimeric DNA structure-specific endonuclease complex MUS81-EME1. Part of the heterodimeric DNA structure-specific endonuclease complex MUS81-EME2. Interacts with BLM; may stimulate the endonuclease activity of MUS81. Interacts with SLX4/BTBD12; this interaction is direct and links the MUS81-EME1 complex to SLX4, which may coordinate the action of the structure-specific endonuclease during DNA repair. Interacts with DCLRE1B/Apollo. Interacts with RECQL5; this interaction stimulates mitotic DNA synthesis. Interacts with CHEK2. Requires Mg(2+) as cofactor. In terms of tissue distribution, expressed highly in testis. Expressed also in bone marrow, brain, thymus and to a lesser extent in heart and skeletal muscle, colon, kidney and spleen.

The protein localises to the nucleus. The protein resides in the nucleolus. Its function is as follows. Catalytic subunit of two functionally distinct, structure-specific, heterodimeric DNA endonucleases MUS81-EME1 and MUS81-EME2 that are involved in the maintenance of genome stability. Both endonucleases have essentially the same substrate specificity though MUS81-EME2 is more active than its MUS81-EME1 counterpart. Both cleave 3'-flaps and nicked Holliday junctions, and exhibit limited endonuclease activity with 5' flaps and nicked double-stranded DNAs. MUS81-EME2 which is active during the replication of DNA is more specifically involved in replication fork processing. Replication forks frequently encounter obstacles to their passage, including DNA base lesions, DNA interstrand cross-links, difficult-to-replicate sequences, transcription bubbles, or tightly bound proteins. One mechanism for the restart of a stalled replication fork involves nucleolytic cleavage mediated by the MUS81-EME2 endonuclease. By acting upon the stalled fork, MUS81-EME2 generates a DNA double-strand break (DSB) that can be repaired by homologous recombination, leading to the restoration of an active fork. MUS81-EME2 could also function in telomere maintenance. MUS81-EME1, on the other hand, is active later in the cell cycle and functions in the resolution of mitotic recombination intermediates including the Holliday junctions, the four-way DNA intermediates that form during homologous recombination. The polypeptide is Structure-specific endonuclease subunit MUS81 (Mus musculus (Mouse)).